The following is a 91-amino-acid chain: Large ribosomal subunit protein bL27 (91 aa).

It belongs to the bacterial ribosomal protein bL27 family.

This chain is Large ribosomal subunit protein bL27, found in Chromobacterium violaceum (strain ATCC 12472 / DSM 30191 / JCM 1249 / CCUG 213 / NBRC 12614 / NCIMB 9131 / NCTC 9757 / MK).